We begin with the raw amino-acid sequence, 392 residues long: Phospho-N-acetylmuramoyl-pentapeptide-transferase (392 aa).

10 helical membrane-spanning segments follow: residues 29–49 (AVLA…WVIG), 76–96 (TMGG…WFDL), 100–120 (FVWI…VDDW), 137–157 (YLWQ…CISE), 192–212 (AVSY…VIVG), 225–245 (GLAI…AYVT), 262–282 (SGEL…FLWF), 289–309 (VFMG…IAII), 314–334 (IVLA…MLQV), and 369–389 (QVVV…LSTL).

It belongs to the glycosyltransferase 4 family. MraY subfamily. It depends on Mg(2+) as a cofactor.

Its subcellular location is the cell inner membrane. It catalyses the reaction UDP-N-acetyl-alpha-D-muramoyl-L-alanyl-gamma-D-glutamyl-meso-2,6-diaminopimeloyl-D-alanyl-D-alanine + di-trans,octa-cis-undecaprenyl phosphate = di-trans,octa-cis-undecaprenyl diphospho-N-acetyl-alpha-D-muramoyl-L-alanyl-D-glutamyl-meso-2,6-diaminopimeloyl-D-alanyl-D-alanine + UMP. It participates in cell wall biogenesis; peptidoglycan biosynthesis. Its function is as follows. Catalyzes the initial step of the lipid cycle reactions in the biosynthesis of the cell wall peptidoglycan: transfers peptidoglycan precursor phospho-MurNAc-pentapeptide from UDP-MurNAc-pentapeptide onto the lipid carrier undecaprenyl phosphate, yielding undecaprenyl-pyrophosphoryl-MurNAc-pentapeptide, known as lipid I. The chain is Phospho-N-acetylmuramoyl-pentapeptide-transferase from Verminephrobacter eiseniae (strain EF01-2).